The chain runs to 511 residues: V-type proton ATPase subunit B, brain isoform (511 aa).

Arg400 contacts ATP.

The protein belongs to the ATPase alpha/beta chains family. As to quaternary structure, V-ATPase is a heteromultimeric enzyme made up of two complexes: the ATP-hydrolytic V1 complex and the proton translocation V0 complex. The V1 complex consists of three catalytic AB heterodimers that form a heterohexamer, three peripheral stalks each consisting of EG heterodimers, one central rotor including subunits D and F, and the regulatory subunits C and H. The proton translocation complex V0 consists of the proton transport subunit a, a ring of proteolipid subunits c9c'', rotary subunit d, subunits e and f, and the accessory subunits ATP6AP1/Ac45 and ATP6AP2/PRR. In terms of tissue distribution, kidney; localizes to early distal nephron, encompassing thick ascending limbs and distal convoluted tubules (at protein level).

Its subcellular location is the apical cell membrane. It is found in the melanosome. The protein localises to the cytoplasm. The protein resides in the cytoplasmic vesicle. It localises to the secretory vesicle. Its subcellular location is the synaptic vesicle membrane. It is found in the clathrin-coated vesicle membrane. Its function is as follows. Non-catalytic subunit of the V1 complex of vacuolar(H+)-ATPase (V-ATPase), a multisubunit enzyme composed of a peripheral complex (V1) that hydrolyzes ATP and a membrane integral complex (V0) that translocates protons. V-ATPase is responsible for acidifying and maintaining the pH of intracellular compartments and in some cell types, is targeted to the plasma membrane, where it is responsible for acidifying the extracellular environment. In renal intercalated cells, can partially compensate the lack of ATP6V1B1 and mediate secretion of protons (H+) into the urine under base-line conditions but not in conditions of acid load. This Homo sapiens (Human) protein is V-type proton ATPase subunit B, brain isoform (ATP6V1B2).